We begin with the raw amino-acid sequence, 778 residues long: Zinc finger protein 749 (778 aa).

Residues 8 to 101 enclose the KRAB domain; sequence MVFEDVAIYF…ILKDILHLAE (94 aa). The segment at 152–174 adopts a C2H2-type 1; degenerate zinc-finger fold; the sequence is FTCTQGGKDFTASSDLLQQQVLN. The C2H2-type 2; degenerate zinc finger occupies 196-218; that stretch reads FNSSQGGKDFCHQHGLFEHQKTH. Residues 224–246 form a C2H2-type 3; degenerate zinc finger; it reads YEFSECGELFRYNSNLIKYQQNH. A C2H2-type 4; degenerate zinc finger spans residues 252-274; that stretch reads YEGTEYGKTFIRKSNLVQHQKIH. 6 consecutive C2H2-type zinc fingers follow at residues 298 to 320, 326 to 348, 354 to 376, 382 to 404, 410 to 432, and 438 to 460; these read YECT…QKTH, YECN…QKVH, YECS…QRVH, FECS…QRVH, YKCS…LKIH, and YECT…QKIH. Lys-466 carries the N6-acetyllysine modification. C2H2-type zinc fingers lie at residues 483–505 and 511–533; these read YTCS…QKIH and YECT…EKIH. Lys-539 is subject to N6-acetyllysine. The C2H2-type 13; degenerate zinc finger occupies 556–578; that stretch reads YVCSECGKAFLTQAHLDGHQKIQ. 3 consecutive C2H2-type zinc fingers follow at residues 584–606, 612–634, and 640–662; these read YECN…QRIH, YKCS…QKVH, and YECS…QRVH. The segment at 668-690 adopts a C2H2-type 17; atypical zinc-finger fold; that stretch reads YECSNCGKFLRYRSTFIKHHKVC. The C2H2-type 18 zinc finger occupies 696 to 718; sequence HECSKCRELFRTKSSLIIHQQSH. The C2H2-type 19; degenerate zinc-finger motif lies at 751-773; it reads YECGESSKVFKYNSSLIKHQIIH. Residues Lys-761 and Lys-768 each participate in a glycyl lysine isopeptide (Lys-Gly) (interchain with G-Cter in SUMO2) cross-link.

Belongs to the krueppel C2H2-type zinc-finger protein family.

The protein resides in the nucleus. In terms of biological role, may be involved in transcriptional regulation. This is Zinc finger protein 749 (ZNF749) from Homo sapiens (Human).